The chain runs to 165 residues: NADH-quinone oxidoreductase subunit I (165 aa).

4Fe-4S ferredoxin-type domains are found at residues R57–E86 and S96–I125. Residues C66, C69, C72, C76, C105, C108, C111, and C115 each contribute to the [4Fe-4S] cluster site.

The protein belongs to the complex I 23 kDa subunit family. As to quaternary structure, NDH-1 is composed of 14 different subunits. Subunits NuoA, H, J, K, L, M, N constitute the membrane sector of the complex. The cofactor is [4Fe-4S] cluster.

The protein localises to the cell inner membrane. It carries out the reaction a quinone + NADH + 5 H(+)(in) = a quinol + NAD(+) + 4 H(+)(out). NDH-1 shuttles electrons from NADH, via FMN and iron-sulfur (Fe-S) centers, to quinones in the respiratory chain. The immediate electron acceptor for the enzyme in this species is believed to be ubiquinone. Couples the redox reaction to proton translocation (for every two electrons transferred, four hydrogen ions are translocated across the cytoplasmic membrane), and thus conserves the redox energy in a proton gradient. This is NADH-quinone oxidoreductase subunit I from Polaromonas sp. (strain JS666 / ATCC BAA-500).